A 97-amino-acid polypeptide reads, in one-letter code: Transcription and mRNA export factor SUS1 (97 aa).

It belongs to the ENY2 family. As to quaternary structure, component of the nuclear pore complex (NPC)-associated TREX-2 complex (transcription and export complex 2), composed of at least SUS1, SAC3, THP1, SEM1, and CDC31. TREX-2 contains 2 SUS1 chains. The TREX-2 complex interacts with the nucleoporin NUP1. Component of the 1.8 MDa SAGA transcription coactivator-HAT complex. SAGA is built of 5 distinct domains with specialized functions. Within the SAGA complex, SUS1, SGF11, SGF73 and UBP8 form an additional subcomplex of SAGA called the DUB module (deubiquitination module). Interacts directly with THP1, SAC3, SGF11, and with the RNA polymerase II.

It is found in the nucleus. The protein resides in the nucleoplasm. Its subcellular location is the cytoplasm. The protein localises to the P-body. Functionally, involved in mRNA export coupled transcription activation by association with both the TREX-2 and the SAGA complexes. At the promoters, SAGA is required for recruitment of the basal transcription machinery. It influences RNA polymerase II transcriptional activity through different activities such as TBP interaction and promoter selectivity, interaction with transcription activators, and chromatin modification through histone acetylation and deubiquitination. Within the SAGA complex, participates in a subcomplex required for deubiquitination of H2B and for the maintenance of steady-state H3 methylation levels. The TREX-2 complex functions in docking export-competent ribonucleoprotein particles (mRNPs) to the nuclear entrance of the nuclear pore complex (nuclear basket). TREX-2 participates in mRNA export and accurate chromatin positioning in the nucleus by tethering genes to the nuclear periphery. May also be involved in cytoplasmic mRNA decay by interaction with components of P-bodies. This is Transcription and mRNA export factor SUS1 from Meyerozyma guilliermondii (strain ATCC 6260 / CBS 566 / DSM 6381 / JCM 1539 / NBRC 10279 / NRRL Y-324) (Yeast).